Reading from the N-terminus, the 355-residue chain is Peptide chain release factor 1 (355 aa).

An N5-methylglutamine modification is found at glutamine 231.

The protein belongs to the prokaryotic/mitochondrial release factor family. Methylated by PrmC. Methylation increases the termination efficiency of RF1.

The protein resides in the cytoplasm. Peptide chain release factor 1 directs the termination of translation in response to the peptide chain termination codons UAG and UAA. The polypeptide is Peptide chain release factor 1 (Aliarcobacter butzleri (strain RM4018) (Arcobacter butzleri)).